We begin with the raw amino-acid sequence, 431 residues long: Na(+)/H(+) antiporter NhaA (431 aa).

The next 11 membrane-spanning stretches (helical) occupy residues 33–53 (VGGA…NSPW), 74–94 (LSIS…VVGV), 112–132 (ALPI…FVGV), 144–164 (GWAI…AVIA), 173–193 (IFLL…IAVF), 197–217 (QLSF…GLAV), 225–245 (FLLL…GVHA), 279–299 (FAVP…LSGF), 311–331 (VIAG…YVLA), 347–367 (VLGL…IGEL), and 379–399 (AKIA…VVLL).

This sequence belongs to the NhaA Na(+)/H(+) (TC 2.A.33) antiporter family.

The protein resides in the cell membrane. It catalyses the reaction Na(+)(in) + 2 H(+)(out) = Na(+)(out) + 2 H(+)(in). In terms of biological role, na(+)/H(+) antiporter that extrudes sodium in exchange for external protons. This chain is Na(+)/H(+) antiporter NhaA, found in Mycolicibacterium smegmatis (strain ATCC 700084 / mc(2)155) (Mycobacterium smegmatis).